Consider the following 441-residue polypeptide: Ribulose bisphosphate carboxylase large chain (441 aa).

Lys5 carries the post-translational modification N6,N6,N6-trimethyllysine. Thr164 is a substrate binding site. Lys166 acts as the Proton acceptor in catalysis. Residue Lys168 coordinates substrate. Lys192, Asp194, and Glu195 together coordinate Mg(2+). N6-carboxylysine is present on Lys192. The active-site Proton acceptor is the His285. Residues Arg286, His318, and Ser370 each coordinate substrate.

It belongs to the RuBisCO large chain family. Type I subfamily. As to quaternary structure, heterohexadecamer of 8 large chains and 8 small chains; disulfide-linked. The disulfide link is formed within the large subunit homodimers. Mg(2+) is required as a cofactor. Post-translationally, the disulfide bond which can form in the large chain dimeric partners within the hexadecamer appears to be associated with oxidative stress and protein turnover.

The protein resides in the plastid. It is found in the chloroplast. The enzyme catalyses 2 (2R)-3-phosphoglycerate + 2 H(+) = D-ribulose 1,5-bisphosphate + CO2 + H2O. It carries out the reaction D-ribulose 1,5-bisphosphate + O2 = 2-phosphoglycolate + (2R)-3-phosphoglycerate + 2 H(+). Its function is as follows. RuBisCO catalyzes two reactions: the carboxylation of D-ribulose 1,5-bisphosphate, the primary event in carbon dioxide fixation, as well as the oxidative fragmentation of the pentose substrate in the photorespiration process. Both reactions occur simultaneously and in competition at the same active site. The chain is Ribulose bisphosphate carboxylase large chain from Hemionitis engywookii (Fendler's false cloak fern).